The chain runs to 127 residues: Large ribosomal subunit protein bL12 (127 aa).

2 positions are modified to N6-methyllysine: K77 and K88.

Belongs to the bacterial ribosomal protein bL12 family. In terms of assembly, homodimer. Part of the ribosomal stalk of the 50S ribosomal subunit. Forms a multimeric L10(L12)X complex, where L10 forms an elongated spine to which 2 to 4 L12 dimers bind in a sequential fashion. Binds GTP-bound translation factors.

Forms part of the ribosomal stalk which helps the ribosome interact with GTP-bound translation factors. Is thus essential for accurate translation. This is Large ribosomal subunit protein bL12 from Nitratidesulfovibrio vulgaris (strain DSM 19637 / Miyazaki F) (Desulfovibrio vulgaris).